We begin with the raw amino-acid sequence, 427 residues long: Delta(14)-sterol reductase (427 aa).

Over methionine 1–tryptophan 25 the chain is Cytoplasmic. Residues leucine 26 to tyrosine 46 traverse the membrane as a helical segment. Topologically, residues glutamine 47–threonine 70 are periplasmic. The helical transmembrane segment at tryptophan 71 to alanine 91 threads the bilayer. The Cytoplasmic segment spans residues proline 92–arginine 110. Residues methionine 111–glycine 131 form a helical membrane-spanning segment. Residues tryptophan 132–glutamine 141 are Periplasmic-facing. A helical membrane pass occupies residues leucine 142–phenylalanine 162. The Cytoplasmic portion of the chain corresponds to tryptophan 163–lysine 197. The helical transmembrane segment at leucine 198–alanine 218 threads the bilayer. The Periplasmic segment spans residues lysine 219–threonine 226. A helical transmembrane segment spans residues valine 227 to isoleucine 247. Topologically, residues histidine 248–lysine 262 are cytoplasmic. The chain crosses the membrane as a helical span at residues phenylalanine 263 to alanine 283. At glutamine 284 to histidine 291 the chain is on the periplasmic side. Residues aspartate 292–phenylalanine 312 form a helical membrane-spanning segment. Topologically, residues arginine 313–arginine 356 are cytoplasmic. NADP(+) is bound by residues lysine 319, arginine 323, leucine 347, tryptophan 352, and asparagine 359 to tyrosine 360. A helical transmembrane segment spans residues histidine 357–glycine 377. Serine 378 is a topological domain (periplasmic). A helical transmembrane segment spans residues proline 379–aspartate 399. Residues aspartate 399, cysteine 403–tyrosine 407, and tyrosine 414 contribute to the NADP(+) site. At aspartate 400–tyrosine 427 the chain is on the cytoplasmic side.

Belongs to the ERG4/ERG24 family.

It localises to the cell inner membrane. It carries out the reaction 4,4-dimethyl-5alpha-cholesta-8,24-dien-3beta-ol + NADP(+) = 4,4-dimethyl-5alpha-cholesta-8,14,24-trien-3beta-ol + NADPH + H(+). Its pathway is steroid biosynthesis; zymosterol biosynthesis; zymosterol from lanosterol. Reduces the C14=C15 double bond of 4,4-dimethyl-cholesta-8,14,24-trienol to produce 4,4-dimethyl-cholesta-8,24-dienol. Complements the deletion of the Delta(14)-sterol reductase gene ERG24 in yeast. The polypeptide is Delta(14)-sterol reductase (Methylotuvimicrobium alcaliphilum (strain DSM 19304 / NCIMB 14124 / VKM B-2133 / 20Z) (Methylomicrobium alcaliphilum)).